Here is a 96-residue protein sequence, read N- to C-terminus: Ubiquitin-like protein NEDD8-like protein 1 (96 aa).

Residues 75–96 (SQSDNSEKSEKSGKSEKDCILM) form a disordered region. Residues 79–96 (NSEKSEKSGKSEKDCILM) are compositionally biased toward basic and acidic residues.

Belongs to the ubiquitin family.

The sequence is that of Ubiquitin-like protein NEDD8-like protein 1 (nedd8l1) from Dictyostelium discoideum (Social amoeba).